We begin with the raw amino-acid sequence, 134 residues long: Small ribosomal subunit protein uS9 (134 aa).

The interval 113-134 (REVERKKYGLKKARRAPQFSKR) is disordered. Residues 120–134 (YGLKKARRAPQFSKR) show a composition bias toward basic residues.

Belongs to the universal ribosomal protein uS9 family.

In Thermotoga petrophila (strain ATCC BAA-488 / DSM 13995 / JCM 10881 / RKU-1), this protein is Small ribosomal subunit protein uS9.